A 397-amino-acid polypeptide reads, in one-letter code: MRTRSKKTKTVNNNNDLQKSEEKQKFDQLPLDLEIEMFRRLPLKSVARFLTLSKSCATTIRSPSFITSFPSQPCTLIASAATIRTCHNLPSSFKSKDQRLYFFSSSSSSSTVFSTRLTCPLSPYDNLIEYYYHYASGLISIGCNRKQIVTNPSTGRFITLPSVRRRRVVVKSFFGYDPVSDQYKVSCMTERRHGLRQDPSSEHQVFTLGEKKPWKMIDCTSIPDHRPWSNGVCIDGFVYYVAKTGQGMSQLSLMRYALRADNLNLFTSLPEELRTLKLSGDTLLNYEGNVAWPLQLHLIFNVWVMDQDGEKHEWLKKITFNIEPWKSSSRYLDVRGTTHTGEFILAPSHYPDDEFYVFHYNLGKNSFTKKKLQVRIYNVRIVSTSSIIGLYLSFSLL.

A disordered region spans residues 1-23 (MRTRSKKTKTVNNNNDLQKSEEK). Residues 24-71 (QKFDQLPLDLEIEMFRRLPLKSVARFLTLSKSCATTIRSPSFITSFPS) enclose the F-box domain.

This chain is Putative F-box protein At1g26510, found in Arabidopsis thaliana (Mouse-ear cress).